The following is a 221-amino-acid chain: Enolase-phosphatase E1 (221 aa).

Mg(2+) is bound by residues Asp9 and Glu11. Residues 116-117 and Lys152 contribute to the substrate site; that span reads SS. Asp180 provides a ligand contact to Mg(2+).

Belongs to the HAD-like hydrolase superfamily. MasA/MtnC family. As to quaternary structure, monomer. Mg(2+) serves as cofactor.

The protein localises to the cytoplasm. It is found in the nucleus. The enzyme catalyses 5-methylsulfanyl-2,3-dioxopentyl phosphate + H2O = 1,2-dihydroxy-5-(methylsulfanyl)pent-1-en-3-one + phosphate. Its pathway is amino-acid biosynthesis; L-methionine biosynthesis via salvage pathway; L-methionine from S-methyl-5-thio-alpha-D-ribose 1-phosphate: step 3/6. It participates in amino-acid biosynthesis; L-methionine biosynthesis via salvage pathway; L-methionine from S-methyl-5-thio-alpha-D-ribose 1-phosphate: step 4/6. In terms of biological role, bifunctional enzyme that catalyzes the enolization of 2,3-diketo-5-methylthiopentyl-1-phosphate (DK-MTP-1-P) into the intermediate 2-hydroxy-3-keto-5-methylthiopentenyl-1-phosphate (HK-MTPenyl-1-P), which is then dephosphorylated to form the acireductone 1,2-dihydroxy-3-keto-5-methylthiopentene (DHK-MTPene). This chain is Enolase-phosphatase E1, found in Kluyveromyces lactis (strain ATCC 8585 / CBS 2359 / DSM 70799 / NBRC 1267 / NRRL Y-1140 / WM37) (Yeast).